A 302-amino-acid chain; its full sequence is Potassium/proton antiporter CemA (302 aa).

A run of 4 helical transmembrane segments spans residues 55–75, 187–207, 225–247, and 262–282; these read VFVS…ITFL, FVSF…IIIL, FLLI…ELFL, and FIFL…KYWI.

Belongs to the CemA family.

Its subcellular location is the plastid. The protein localises to the chloroplast inner membrane. The catalysed reaction is K(+)(in) + H(+)(out) = K(+)(out) + H(+)(in). Its function is as follows. Contributes to K(+)/H(+) antiport activity by supporting proton efflux to control proton extrusion and homeostasis in chloroplasts in a light-dependent manner to modulate photosynthesis. Prevents excessive induction of non-photochemical quenching (NPQ) under continuous-light conditions. Indirectly promotes efficient inorganic carbon uptake into chloroplasts. The polypeptide is Potassium/proton antiporter CemA (Tupiella akineta (Green alga)).